The chain runs to 28 residues: Cysteine-rich venom protein asurin-2 (28 aa).

Residues 1–15 are compositionally biased toward basic and acidic residues; that stretch reads SNKKDYRKEIVDKHN. Positions 1–28 are disordered; sequence SNKKDYRKEIVDKHNALSRSVKPTASNM. A compositionally biased stretch (polar residues) spans 17 to 28; that stretch reads LSRSVKPTASNM.

The protein belongs to the CRISP family. Post-translationally, contains 8 disulfide bonds. In terms of tissue distribution, expressed by the venom gland.

It localises to the secreted. Its function is as follows. Blocks contraction of smooth muscle elicited by high potassium-induced depolarization, but does not block caffeine-stimulated contraction. May target voltage-gated calcium channels on smooth muscle. The polypeptide is Cysteine-rich venom protein asurin-2 (Austrelaps superbus (Lowland copperhead snake)).